Reading from the N-terminus, the 257-residue chain is Type III pantothenate kinase (257 aa).

Residue 24–31 (MIGNSRLH) coordinates ATP. Substrate-binding positions include tyrosine 96 and 100–103 (GIDR). Aspartate 102 (proton acceptor) is an active-site residue. K(+) is bound at residue aspartate 122. Threonine 125 contacts ATP. Substrate is bound at residue threonine 180.

This sequence belongs to the type III pantothenate kinase family. As to quaternary structure, homodimer. It depends on NH4(+) as a cofactor. The cofactor is K(+).

The protein localises to the cytoplasm. The catalysed reaction is (R)-pantothenate + ATP = (R)-4'-phosphopantothenate + ADP + H(+). It functions in the pathway cofactor biosynthesis; coenzyme A biosynthesis; CoA from (R)-pantothenate: step 1/5. In terms of biological role, catalyzes the phosphorylation of pantothenate (Pan), the first step in CoA biosynthesis. The chain is Type III pantothenate kinase from Synechocystis sp. (strain ATCC 27184 / PCC 6803 / Kazusa).